The chain runs to 215 residues: 3,4-dihydroxy-2-butanone 4-phosphate synthase (215 aa).

D-ribulose 5-phosphate-binding positions include 38-39 (RE), Asp-43, 151-155 (RRGHT), and Glu-175. Glu-39 is a binding site for Mg(2+). Residue His-154 participates in Mg(2+) binding.

This sequence belongs to the DHBP synthase family. In terms of assembly, homodimer. Mg(2+) serves as cofactor. Mn(2+) is required as a cofactor.

It catalyses the reaction D-ribulose 5-phosphate = (2S)-2-hydroxy-3-oxobutyl phosphate + formate + H(+). It functions in the pathway cofactor biosynthesis; riboflavin biosynthesis; 2-hydroxy-3-oxobutyl phosphate from D-ribulose 5-phosphate: step 1/1. Its function is as follows. Catalyzes the conversion of D-ribulose 5-phosphate to formate and 3,4-dihydroxy-2-butanone 4-phosphate. The sequence is that of 3,4-dihydroxy-2-butanone 4-phosphate synthase from Haemophilus influenzae (strain ATCC 51907 / DSM 11121 / KW20 / Rd).